The following is a 799-amino-acid chain: Valine--tRNA ligase (799 aa).

Lys-536 contributes to the ATP binding site.

It belongs to the class-I aminoacyl-tRNA synthetase family. ValS type 2 subfamily.

The protein resides in the cytoplasm. The enzyme catalyses tRNA(Val) + L-valine + ATP = L-valyl-tRNA(Val) + AMP + diphosphate. Functionally, catalyzes the attachment of valine to tRNA(Val). As ValRS can inadvertently accommodate and process structurally similar amino acids such as threonine, to avoid such errors, it has a 'posttransfer' editing activity that hydrolyzes mischarged Thr-tRNA(Val) in a tRNA-dependent manner. The chain is Valine--tRNA ligase (valS) from Pyrobaculum aerophilum (strain ATCC 51768 / DSM 7523 / JCM 9630 / CIP 104966 / NBRC 100827 / IM2).